We begin with the raw amino-acid sequence, 61 residues long: Large ribosomal subunit protein uL30 (61 aa).

Belongs to the universal ribosomal protein uL30 family. Part of the 50S ribosomal subunit.

The sequence is that of Large ribosomal subunit protein uL30 from Neisseria gonorrhoeae (strain ATCC 700825 / FA 1090).